The primary structure comprises 351 residues: Anthranilate phosphoribosyltransferase (351 aa).

5-phospho-alpha-D-ribose 1-diphosphate contacts are provided by residues glycine 85, 88–89, serine 93, 95–98, 113–121, and threonine 125; these read GD, NIST, and KHGNRAASS. Residue glycine 85 participates in anthranilate binding. Serine 97 provides a ligand contact to Mg(2+). Asparagine 116 is a binding site for anthranilate. An anthranilate-binding site is contributed by arginine 171. Mg(2+) contacts are provided by aspartate 229 and glutamate 230.

It belongs to the anthranilate phosphoribosyltransferase family. Homodimer. It depends on Mg(2+) as a cofactor.

The enzyme catalyses N-(5-phospho-beta-D-ribosyl)anthranilate + diphosphate = 5-phospho-alpha-D-ribose 1-diphosphate + anthranilate. It functions in the pathway amino-acid biosynthesis; L-tryptophan biosynthesis; L-tryptophan from chorismate: step 2/5. Catalyzes the transfer of the phosphoribosyl group of 5-phosphorylribose-1-pyrophosphate (PRPP) to anthranilate to yield N-(5'-phosphoribosyl)-anthranilate (PRA). The chain is Anthranilate phosphoribosyltransferase from Saccharopolyspora erythraea (strain ATCC 11635 / DSM 40517 / JCM 4748 / NBRC 13426 / NCIMB 8594 / NRRL 2338).